Here is a 377-residue protein sequence, read N- to C-terminus: Chaperone protein DnaJ (377 aa).

Residues 4–69 (DYYEALGVTR…QKRAAYDRFG (66 aa)) form the J domain. The segment at 135-213 (GKTAQIRVPT…CHGQGRVTQE (79 aa)) adopts a CR-type zinc-finger fold. Positions 148, 151, 165, 168, 187, 190, 201, and 204 each coordinate Zn(2+). CXXCXGXG motif repeat units lie at residues 148–155 (CDECSGSG), 165–172 (CTMCSGSG), 187–194 (CPGCNGRG), and 201–208 (CEKCHGQG).

Belongs to the DnaJ family. In terms of assembly, homodimer. Zn(2+) is required as a cofactor.

Its subcellular location is the cytoplasm. Participates actively in the response to hyperosmotic and heat shock by preventing the aggregation of stress-denatured proteins and by disaggregating proteins, also in an autonomous, DnaK-independent fashion. Unfolded proteins bind initially to DnaJ; upon interaction with the DnaJ-bound protein, DnaK hydrolyzes its bound ATP, resulting in the formation of a stable complex. GrpE releases ADP from DnaK; ATP binding to DnaK triggers the release of the substrate protein, thus completing the reaction cycle. Several rounds of ATP-dependent interactions between DnaJ, DnaK and GrpE are required for fully efficient folding. Also involved, together with DnaK and GrpE, in the DNA replication of plasmids through activation of initiation proteins. In Brucella canis (strain ATCC 23365 / NCTC 10854 / RM-666), this protein is Chaperone protein DnaJ.